The primary structure comprises 178 residues: Inorganic pyrophosphatase (178 aa).

The substrate site is built by K30, R44, and Y56. Mg(2+) contacts are provided by D66, D71, and D103. Y140 serves as a coordination point for substrate.

It belongs to the PPase family. In terms of assembly, homohexamer. Mg(2+) serves as cofactor.

The protein localises to the cytoplasm. It carries out the reaction diphosphate + H2O = 2 phosphate + H(+). Functionally, catalyzes the hydrolysis of inorganic pyrophosphate (PPi) forming two phosphate ions. This chain is Inorganic pyrophosphatase, found in Pyrococcus abyssi (strain GE5 / Orsay).